Here is a 38-residue protein sequence, read N- to C-terminus: Photosystem II reaction center protein L (38 aa).

Residues 17 to 37 (SLYWGLLLIFVLAVLFSSYIF) form a helical membrane-spanning segment.

Belongs to the PsbL family. In terms of assembly, PSII is composed of 1 copy each of membrane proteins PsbA, PsbB, PsbC, PsbD, PsbE, PsbF, PsbH, PsbI, PsbJ, PsbK, PsbL, PsbM, PsbT, PsbX, PsbY, PsbZ, Psb30/Ycf12, at least 3 peripheral proteins of the oxygen-evolving complex and a large number of cofactors. It forms dimeric complexes.

It localises to the plastid. The protein localises to the chloroplast thylakoid membrane. Functionally, one of the components of the core complex of photosystem II (PSII). PSII is a light-driven water:plastoquinone oxidoreductase that uses light energy to abstract electrons from H(2)O, generating O(2) and a proton gradient subsequently used for ATP formation. It consists of a core antenna complex that captures photons, and an electron transfer chain that converts photonic excitation into a charge separation. This subunit is found at the monomer-monomer interface and is required for correct PSII assembly and/or dimerization. The polypeptide is Photosystem II reaction center protein L (Tetradesmus obliquus (Green alga)).